The primary structure comprises 244 residues: 2-C-methyl-D-erythritol 4-phosphate cytidylyltransferase (244 aa).

Belongs to the IspD/TarI cytidylyltransferase family. IspD subfamily.

It carries out the reaction 2-C-methyl-D-erythritol 4-phosphate + CTP + H(+) = 4-CDP-2-C-methyl-D-erythritol + diphosphate. The protein operates within isoprenoid biosynthesis; isopentenyl diphosphate biosynthesis via DXP pathway; isopentenyl diphosphate from 1-deoxy-D-xylulose 5-phosphate: step 2/6. In terms of biological role, catalyzes the formation of 4-diphosphocytidyl-2-C-methyl-D-erythritol from CTP and 2-C-methyl-D-erythritol 4-phosphate (MEP). The protein is 2-C-methyl-D-erythritol 4-phosphate cytidylyltransferase of Prosthecochloris aestuarii (strain DSM 271 / SK 413).